A 261-amino-acid chain; its full sequence is uncharacterized protein (261 aa).

Belongs to the PaiB family.

This is an uncharacterized protein from Aspergillus fumigatus (strain ATCC MYA-4609 / CBS 101355 / FGSC A1100 / Af293) (Neosartorya fumigata).